We begin with the raw amino-acid sequence, 177 residues long: ATP-dependent protease subunit HslV (177 aa).

Residue threonine 5 is part of the active site. Na(+) contacts are provided by glycine 161, cysteine 164, and threonine 167.

Belongs to the peptidase T1B family. HslV subfamily. In terms of assembly, a double ring-shaped homohexamer of HslV is capped on each side by a ring-shaped HslU homohexamer. The assembly of the HslU/HslV complex is dependent on binding of ATP.

It localises to the cytoplasm. The catalysed reaction is ATP-dependent cleavage of peptide bonds with broad specificity.. Allosterically activated by HslU binding. In terms of biological role, protease subunit of a proteasome-like degradation complex believed to be a general protein degrading machinery. The chain is ATP-dependent protease subunit HslV from Campylobacter concisus (strain 13826).